The following is a 244-amino-acid chain: NAD(P)H-quinone oxidoreductase subunit K (244 aa).

4 residues coordinate [4Fe-4S] cluster: Cys-60, Cys-61, Cys-125, and Cys-156.

This sequence belongs to the complex I 20 kDa subunit family. As to quaternary structure, NDH-1 can be composed of about 15 different subunits; different subcomplexes with different compositions have been identified which probably have different functions. It depends on [4Fe-4S] cluster as a cofactor.

Its subcellular location is the cellular thylakoid membrane. The enzyme catalyses a plastoquinone + NADH + (n+1) H(+)(in) = a plastoquinol + NAD(+) + n H(+)(out). The catalysed reaction is a plastoquinone + NADPH + (n+1) H(+)(in) = a plastoquinol + NADP(+) + n H(+)(out). In terms of biological role, NDH-1 shuttles electrons from an unknown electron donor, via FMN and iron-sulfur (Fe-S) centers, to quinones in the respiratory and/or the photosynthetic chain. The immediate electron acceptor for the enzyme in this species is believed to be plastoquinone. Couples the redox reaction to proton translocation, and thus conserves the redox energy in a proton gradient. Cyanobacterial NDH-1 also plays a role in inorganic carbon-concentration. The sequence is that of NAD(P)H-quinone oxidoreductase subunit K from Prochlorococcus marinus (strain MIT 9515).